Reading from the N-terminus, the 119-residue chain is Large ribosomal subunit protein bL20 (119 aa).

The protein belongs to the bacterial ribosomal protein bL20 family.

In terms of biological role, binds directly to 23S ribosomal RNA and is necessary for the in vitro assembly process of the 50S ribosomal subunit. It is not involved in the protein synthesizing functions of that subunit. In Streptococcus pyogenes serotype M1, this protein is Large ribosomal subunit protein bL20.